A 320-amino-acid polypeptide reads, in one-letter code: Cytochrome f (320 aa).

The signal sequence occupies residues 1 to 35 (MQTRNTFSWIREEITRSISVSLMIYIITWASISSA). Residues Tyr36, Cys56, Cys59, and His60 each coordinate heme. Residues 286–306 (VQGLLFFLGSVVLAQIFLVLK) form a helical membrane-spanning segment.

This sequence belongs to the cytochrome f family. As to quaternary structure, the 4 large subunits of the cytochrome b6-f complex are cytochrome b6, subunit IV (17 kDa polypeptide, petD), cytochrome f and the Rieske protein, while the 4 small subunits are PetG, PetL, PetM and PetN. The complex functions as a dimer. The cofactor is heme.

Its subcellular location is the plastid. The protein localises to the chloroplast thylakoid membrane. Component of the cytochrome b6-f complex, which mediates electron transfer between photosystem II (PSII) and photosystem I (PSI), cyclic electron flow around PSI, and state transitions. This is Cytochrome f from Lepidium virginicum (Virginia pepperweed).